The following is an 811-amino-acid chain: RFX-like DNA-binding protein RFX1 (811 aa).

2 disordered regions span residues 48–92 (EPTS…TYLP) and 111–156 (LLHQ…QRQP). The span at 51-70 (SRGSNDNSNGPSNGSSVNSN) shows a compositional bias: low complexity. A compositionally biased stretch (pro residues) spans 140–149 (SPTPTQPPAQ). S173 is subject to Phosphoserine. Residues 181 to 222 (KSEETLNNNPPTAAKRTNTFPSIPSSTKKQKTSQEKRISSIS) form a disordered region. The segment covering 185–204 (TLNNNPPTAAKRTNTFPSIP) has biased composition (polar residues). Residues 285–360 (ALLWLMKNCK…YHYCGLKLTV (76 aa)) constitute a DNA-binding region (RFX-type winged-helix). A compositionally biased stretch (low complexity) spans 377-391 (LVHNNDPISPLSSPS). The disordered stretch occupies residues 377–461 (LVHNNDPISP…AANNPTGTLS (85 aa)). Residues 409-428 (NRKSLSRTGSPVKQSSNDNP) show a composition bias toward polar residues. Basic and acidic residues predominate over residues 434 to 445 (ESQHPNETEANK).

This sequence belongs to the RFX family.

This chain is RFX-like DNA-binding protein RFX1 (RFX1), found in Saccharomyces cerevisiae (strain ATCC 204508 / S288c) (Baker's yeast).